A 431-amino-acid polypeptide reads, in one-letter code: Citrate synthase (431 aa).

Residues H306 and D364 contribute to the active site.

Belongs to the citrate synthase family.

It catalyses the reaction oxaloacetate + acetyl-CoA + H2O = citrate + CoA + H(+). Its pathway is carbohydrate metabolism; tricarboxylic acid cycle; isocitrate from oxaloacetate: step 1/2. This chain is Citrate synthase (gltA), found in Bartonella henselae (strain ATCC 49882 / DSM 28221 / CCUG 30454 / Houston 1) (Rochalimaea henselae).